A 256-amino-acid chain; its full sequence is ATP synthase peripheral stalk subunit b, mitochondrial (256 aa).

Residues Met1–Ala42 constitute a mitochondrion transit peptide. Lys131 bears the N6-succinyllysine mark. N6-acetyllysine occurs at positions 139, 154, 162, 221, 233, and 244.

This sequence belongs to the eukaryotic ATPase B chain family. Component of the ATP synthase complex composed at least of ATP5F1A/subunit alpha, ATP5F1B/subunit beta, ATP5MC1/subunit c (homooctomer), MT-ATP6/subunit a, MT-ATP8/subunit 8, ATP5ME/subunit e, ATP5MF/subunit f, ATP5MG/subunit g, ATP5MK/subunit k, ATP5MJ/subunit j, ATP5F1C/subunit gamma, ATP5F1D/subunit delta, ATP5F1E/subunit epsilon, ATP5PF/subunit F6, ATP5PB/subunit b, ATP5PD/subunit d, ATP5PO/subunit OSCP. ATP synthase complex consists of a soluble F(1) head domain (subunits alpha(3) and beta(3)) - the catalytic core - and a membrane F(0) domain - the membrane proton channel (subunits c, a, 8, e, f, g, k and j). These two domains are linked by a central stalk (subunits gamma, delta, and epsilon) rotating inside the F1 region and a stationary peripheral stalk (subunits F6, b, d, and OSCP).

The protein resides in the mitochondrion. The protein localises to the mitochondrion inner membrane. In terms of biological role, subunit b, of the mitochondrial membrane ATP synthase complex (F(1)F(0) ATP synthase or Complex V) that produces ATP from ADP in the presence of a proton gradient across the membrane which is generated by electron transport complexes of the respiratory chain. ATP synthase complex consist of a soluble F(1) head domain - the catalytic core - and a membrane F(1) domain - the membrane proton channel. These two domains are linked by a central stalk rotating inside the F(1) region and a stationary peripheral stalk. During catalysis, ATP synthesis in the catalytic domain of F(1) is coupled via a rotary mechanism of the central stalk subunits to proton translocation. In vivo, can only synthesize ATP although its ATP hydrolase activity can be activated artificially in vitro. Part of the complex F(0) domain. Part of the complex F(0) domain and the peripheric stalk, which acts as a stator to hold the catalytic alpha(3)beta(3) subcomplex and subunit a/ATP6 static relative to the rotary elements. This chain is ATP synthase peripheral stalk subunit b, mitochondrial, found in Bos taurus (Bovine).